Reading from the N-terminus, the 486-residue chain is UDP-N-acetylmuramate--L-alanine ligase (486 aa).

126–132 (GTHGKTT) lines the ATP pocket.

Belongs to the MurCDEF family.

Its subcellular location is the cytoplasm. The catalysed reaction is UDP-N-acetyl-alpha-D-muramate + L-alanine + ATP = UDP-N-acetyl-alpha-D-muramoyl-L-alanine + ADP + phosphate + H(+). It participates in cell wall biogenesis; peptidoglycan biosynthesis. Its function is as follows. Cell wall formation. This is UDP-N-acetylmuramate--L-alanine ligase from Pectobacterium atrosepticum (strain SCRI 1043 / ATCC BAA-672) (Erwinia carotovora subsp. atroseptica).